Consider the following 236-residue polypeptide: Eukaryotic translation initiation factor 3 subunit J (236 aa).

The disordered stretch occupies residues 1-86 (MADDWESAAD…KEEEEQKRLA (86 aa)). Residues 28 to 46 (GEDDDEDVKESWEDEEEKK) are compositionally biased toward acidic residues. 2 stretches are compositionally biased toward basic and acidic residues: residues 47-58 (DEEKPTKTEAPV) and 68-86 (AKLE…KRLA). Residues 61–115 (KPNKALKAKLEEQERLKEEEEQKRLAEMTPEEKLAEKLRLQKIQEESDLKSALET) are a coiled coil.

It belongs to the eIF-3 subunit J family. In terms of assembly, component of the eukaryotic translation initiation factor 3 (eIF-3) complex. The eIF-3 complex interacts with pix.

It localises to the cytoplasm. Its function is as follows. Component of the eukaryotic translation initiation factor 3 (eIF-3) complex, which is involved in protein synthesis of a specialized repertoire of mRNAs and, together with other initiation factors, stimulates binding of mRNA and methionyl-tRNAi to the 40S ribosome. The eIF-3 complex specifically targets and initiates translation of a subset of mRNAs involved in cell proliferation. In Drosophila mojavensis (Fruit fly), this protein is Eukaryotic translation initiation factor 3 subunit J.